A 152-amino-acid polypeptide reads, in one-letter code: Ribosomal RNA large subunit methyltransferase H (152 aa).

S-adenosyl-L-methionine is bound by residues Leu69, Gly96, and Phe118–Phe123.

It belongs to the RNA methyltransferase RlmH family. In terms of assembly, homodimer.

Its subcellular location is the cytoplasm. It catalyses the reaction pseudouridine(1915) in 23S rRNA + S-adenosyl-L-methionine = N(3)-methylpseudouridine(1915) in 23S rRNA + S-adenosyl-L-homocysteine + H(+). In terms of biological role, specifically methylates the pseudouridine at position 1915 (m3Psi1915) in 23S rRNA. This is Ribosomal RNA large subunit methyltransferase H from Mesomycoplasma hyopneumoniae (strain 232) (Mycoplasma hyopneumoniae).